The sequence spans 434 residues: Evolutionarily conserved signaling intermediate in Toll pathway, mitochondrial (434 aa).

Residues 1–48 (MSWVQVNLLARGLSRGWGSICRTVLSGTPFAQPSLQARGLHCSAVTHK) constitute a mitochondrion transit peptide. Lys371 is covalently cross-linked (Glycyl lysine isopeptide (Lys-Gly) (interchain with G-Cter in ubiquitin)). Residues 403–434 (TRLEGQSPPHSPPKGPEEDDEAIQAQQRQGQS) are disordered.

It belongs to the ECSIT family. In terms of assembly, interacts with MAP3K1, SMAD4 and TRAF6. Interacts with SMAD1 only after BMP4-treatment. Part of the mitochondrial complex I assembly/MCIA complex that comprises at least the core subunits TMEM126B, NDUFAF1, ECSIT and ACAD9 and complement subunits such as COA1 and TMEM186. Interacts with NDUFAF1. Interacts with ACAD9. Interacts with TRIM59. Interacts with TMEM70 and TMEM242. Interacts (when ubiquitinated) with NF-kappa-B subunits RELA and NFKB1. Interacts with RIGI, IFIT1 and MAVS; these interactions promote RLR-mediated type I IFN induction. Interacts with SQSTM1; this interaction inhibits TLR4 signaling via functional regulation of the TRAF6-ECSIT complex. Interacts with cereblon/CRBN; this interaction inhibits the ubiquitination of ECSIT. In terms of processing, ubiquitinated on Lys-371; leading to translocation in the nucleus together with RELA and NFKB1 and expression of NF-kappa-B-dependent genes.

It is found in the cytoplasm. Its subcellular location is the nucleus. It localises to the mitochondrion. Its function is as follows. Adapter protein that plays a role in different signaling pathways including TLRs and IL-1 pathways or innate antiviral induction signaling. Plays a role in the activation of NF-kappa-B by forming a signal complex with TRAF6 and TAK1/MAP3K7 to activate TAK1/MAP3K7 leading to activation of IKKs. Once ubiquitinated, interacts with the dissociated RELA and NFKB1 proteins and translocates to the nucleus where it induces NF-kappa-B-dependent gene expression. Plays a role in innate antiviral immune response by bridging the pattern recognition receptors RIGI and MDA5/IFIT1 to the MAVS complex at the mitochondrion. Promotes proteolytic activation of MAP3K1. Involved in the BMP signaling pathway. Required for normal embryonic development. As part of the MCIA complex, involved in the assembly of the mitochondrial complex I. The polypeptide is Evolutionarily conserved signaling intermediate in Toll pathway, mitochondrial (Rattus norvegicus (Rat)).